Reading from the N-terminus, the 2388-residue chain is MNLDSLSLALSQISYLVDNLTKKNYRASQLEIQHIVNRHGPEADRHLLRCLFSHVDFSGDGKSSGKDFHQTQFLIQECASLITKPNFISTLSYAIDNPLHYQKSLKPSPHLFAQLSKVLKLSKVQEVIFGLALLNSSSCELRGFAAQFVKQKLPDLLRSYVDVDVSGSQEGGFQDIAIEVLHLLLSNLLFGQKGAFGVGQEQIVAFLKTLRRDFPQERCPVVLAPLLYPEKRDILMDRILADSGGITKTMMDSSLADFMQEVGYSFCASVEECRNVIVQFGVREVTAVQVARVLGMMARTHSGLTDGIPLQSITSPGSGIWSDGKDKNDAVQPHTWNVEVLIDVVKELNPTLNFKEVTYELDNPSFQIRDSKGLQTVVYGIQRGLGIEAFPVDLVYRPWKNAEGQLSFIQHSLVNPDVFCFADYACHAVATDILKAPPEDDNREIATWKSLDLIESLLRLAELGQYEQVKQLFAYPIKHCPDMLVLALLQINTTWHTLRHELISTLMPIFLGNHPNSAIILHYAWHGQGQSPSIRQLIMHAMAEWYMRGEQYDQARLSRILDVAQDLKALSMLLNGTPFAFVIDLAALASRREYLKLDKWLTDKIREHGEPFIQACMTFLKRRCPSILGGLAPEKDQPKSAQLPPETLATMLACLQACAGSVSQELSETILTMVANCSNVVNKARQPPPGVMPKGRPPSTSSLDAISPVQIDPIAAMASLSIGGSAAPHTQSMPVFPPNLGSAFSTPQSPAKAFPPLTAPNQSTAFSGLGGLTSQLPGGLGTGSLTGMGTGGLSLPTVNSDPFGQRKLSTSGLNQPTFQQTDLSQVWPEANQHFSKEIDDEANSYFQRIYNQPPHPTMSVDEVLEMLQRFKDSNIKREREVFNCMLRNLFEEYRFFPQYPDKELHITACLFGGIIEKGLVTYMALGLALRYVLEALRKPYQSKMYFFGIAALDRFKNRLKDYPQYCQHLASISHFMQFPHHLQEYIEYGQQSRDPPVKMQGSITTPGSIALSQAQTPAKPASSSAVTTPTTTTPAKTITITRPTGVSFKKDVPPSINTTNIDTLLVATDLAGQIVEPPENVQEKIAFIFNNLSQSNMTQKVEELKETVKDDYMPWVSQYLVMKRVSIELNFHSLYSNFLDALKHLEFNKMVLAETYRNIKVLLTSDKAAANFSDRSLLKNLGHWLGMITLAKNKPILHTDLDLKSLLLEAYVKGQQELLYVVPFVAKVLESSVRSVVFRPPNPWTMAIMNVLAELHQEHDLKLNLKFEIEVLCKNLVLDINDLKPGTLLKDKDRLKSLDEQLSAPKKDVKQPEELPPMTSASEYAIRTAGKLWASVEKQESDAVFTATATAPPPSTTCTTTVPPQPQYSYHDIHVYSLAGLAPHITLNPTIPLFQAHPQLKQCVRQAIERAVQELVHPVVDRSIKIAMTTCEQIVRKDFALDSEESRMRIAAHHMMRNLTAGMAMITCREPLLMSIATNLKNSFATAMRAASPQQREMMEQAAAQLAQDNCELACCFIQKTAVEKAGPEMDKRPATEFELRKHARQEGRRYCDPVVLTYQAERMPEQIRLKVGGVDPKQLAVYEEFARNVPGFLPTNDLTQPTGFLAQPMKQQAWATDDVAQIYDKCITELEQHLHAIPPALSMNPQSQALRSLLEAVAVARNSRDAIAALGLLQKAVEGLLDATSGADADLLLRYRECHLLVLKALQDGRAYGSPWCNKQITRCLIECRDEYKYNVEAVELLIRNHLVNMQQYDLHLAQSMENGLNYMAVAFAMQLVKILLVDERSVSHVTEAEFFHTIETLMRINAHSRGNAPEGLPQLMDVLRSNFDAMMERAHGGPNFMMHSGISQASEYDDPPGLREKAEYLLREWVNLYHSAAAGRDSTKAFSAFVGQMHQQGILKTDDLITRFFRLCTEMCVEISYRAQAEQQHNPAANPTMIRAKCYHNLDAFVRLIALLVKHSGEATNTVTKINLLNKVLGIVVGVLLQDHEVRQSEFQQLPYHRIFIMLLLELNAPEHVLETINFQTLTAFCNTFHILRPTKAPGFVYAWLELISHRIFIARMLAHTPQQKGWPMYAQLLIDLFKYLAPFLRNVELTKPMQILYKGTLRVLLVLLHDFPEFLCDYHYGFCDVIPPNCIQLRNLILSAFPRNMRLPDPFTPNLKVDMLSEINIAPRILTNFTGVMPPQFKKDLDSYLKTRSPVTFLSELRSNLQVSNEPGNRYNIQLINALVLYVGTQAIAHIHNKGSTPSMSTITHSAHMDIFQNLAVDLDTEGRYLFLNAIANQLRYPNSHTHYFSCTMLYLFAEANTEAIQEQITRVLLERLIVNRPHPWGLLITFIELIKNPAFKFWNHEFVHCAPEIEKLFQSVAQCCMGQKQAQQVMEGTGAS.

4 short sequence motifs (LXXLL) span residues 153-157 (LPDLL), 181-185 (LHLLL), 223-227 (LAPLL), and 570-574 (LSMLL). Disordered regions lie at residues 1012–1035 (SQAQ…TTPA) and 1300–1320 (EQLS…PMTS). Positions 1016-1035 (TPAKPASSSAVTTPTTTTPA) are enriched in low complexity. The segment at 1076–1617 (EPPENVQEKI…QPMKQQAWAT (542 aa)) is interaction with CCR4-NOT complex catalytic subunits. A compositionally biased stretch (basic and acidic residues) spans 1300 to 1313 (EQLSAPKKDVKQPE). 3 short sequence motifs (LXXLL) span residues 1651–1655 (LRSLL), 1954–1958 (LIALL), and 2108–2112 (LRVLL).

This sequence belongs to the CNOT1 family. As to quaternary structure, component of the CCR4-NOT complex.

The protein localises to the cytoplasm. It localises to the nucleus. Its function is as follows. Scaffolding component of the CCR4-NOT complex which is one of the major cellular mRNA deadenylases and is linked to various cellular processes including bulk mRNA degradation, miRNA-mediated repression, translational repression during translational initiation and general transcription regulation. Additional complex functions may be a consequence of its influence on mRNA expression. Its scaffolding function implies its interaction with the catalytic complex module and diverse RNA-binding proteins mediating the complex recruitment to selected mRNA 3'UTRs. Acts as a transcriptional repressor. Represses the ligand-dependent transcriptional activation by nuclear receptors. This chain is CCR4-NOT transcription complex subunit 1 (cnot1), found in Xenopus tropicalis (Western clawed frog).